A 392-amino-acid chain; its full sequence is Putative pectate lyase 21 (392 aa).

Positions 1 to 21 (MSIVCTFFLFLLNTSFAFAFA) are cleaved as a signal peptide. An N-linked (GlcNAc...) asparagine glycan is attached at Asn38. The Ca(2+) site is built by Asp189, Asp213, and Asp217. Asn220 carries an N-linked (GlcNAc...) asparagine glycan. Residue Arg269 is part of the active site.

This sequence belongs to the polysaccharide lyase 1 family. It depends on Ca(2+) as a cofactor.

The enzyme catalyses Eliminative cleavage of (1-&gt;4)-alpha-D-galacturonan to give oligosaccharides with 4-deoxy-alpha-D-galact-4-enuronosyl groups at their non-reducing ends.. Its pathway is glycan metabolism; pectin degradation; 2-dehydro-3-deoxy-D-gluconate from pectin: step 2/5. The chain is Putative pectate lyase 21 from Arabidopsis thaliana (Mouse-ear cress).